A 731-amino-acid chain; its full sequence is SUN domain-containing protein 2 (731 aa).

Disordered regions lie at residues 1–69 (MSRR…SHTS) and 106–142 (SGDL…FGSS). Residues 1–128 (MSRRSQRLTR…GSESSKANGL (128 aa)) are LMNA-binding. Residues 1-226 (MSRRSQRLTR…SRHFSLNLKS (226 aa)) lie on the Nuclear side of the membrane. S12 is subject to Phosphoserine. Low complexity predominate over residues 18–33 (GGSSSSGASSVAGSQG). Residues S39 and S55 each carry the phosphoserine modification. Phosphothreonine is present on T117. 3 positions are modified to phosphoserine: S120, S123, and S147. The chain crosses the membrane as a helical span at residues 227-247 (FLWFLLLLLLLTGLTYGAWHF). At 248 to 731 (YPLGLQTLQP…RFRVHGEPAH (484 aa)) the chain is on the perinuclear space side. 2 coiled-coil regions span residues 396–452 (QESE…VADE) and 486–519 (RSGL…KSAR). Residues 521 to 731 (AAASLGQILQ…RFRVHGEPAH (211 aa)) are sufficient for interaction with SYNE1 and SYNE2. Positions 569 to 730 (GASVISTRCS…YRFRVHGEPA (162 aa)) constitute an SUN domain. A glycan (N-linked (GlcNAc...) asparagine) is linked at N650.

As to quaternary structure, core component of the LINC complex which is composed of inner nuclear membrane SUN domain-containing proteins coupled to outer nuclear membrane KASH domain-containing nesprins. SUN and KASH domain-containing proteins seem to bind each other promiscuously; however, differentially expression of LINC complex constituents is giving rise to specific assemblies. At least SUN1/2-containing core LINC complexes are proposed to be hexameric composed of three protomers of each KASH and SUN domain-containing protein. Interacts with SYNE2; the SUN2:SYNE2/KASH2 LINC complex is a heterohexamer; the homotrimeric cloverleave-like conformation of the SUN domain is a prerequisite for LINC complex formation in which three separate SYNE2/KASH2 peptides bind at the interface of adjacent SUN domains. Component of a probable SUN2:KASH5 LINC complex. Interacts with SYNE1 and SYNE3; probably forming respective LINC complexes. Interacts with A-type lamin. Interaction with lamins B1 and C is hardly detectable. Interacts with EMD. Interacts with RAB5A. Interacts with TMEM43 and TMEM201. Interacts with IRAG2. In terms of processing, the disulfide bond with SYNE2 is required for stability of the SUN2:SYNE2/KASH2 LINC complex under tensile forces though not required for the interaction. The disulfide bond is proposed to be conserved in LINC complexes involved in force transmission. Highly expressed in heart, placenta and muscle.

Its subcellular location is the nucleus inner membrane. The protein localises to the nucleus envelope. It is found in the endosome membrane. Functionally, as a component of the LINC (LInker of Nucleoskeleton and Cytoskeleton) complex, involved in the connection between the nuclear lamina and the cytoskeleton. The nucleocytoplasmic interactions established by the LINC complex play an important role in the transmission of mechanical forces across the nuclear envelope and in nuclear movement and positioning. Specifically, SYNE2 and SUN2 assemble in arrays of transmembrane actin-associated nuclear (TAN) lines which are bound to F-actin cables and couple the nucleus to retrograde actin flow during actin-dependent nuclear movement. Required for interkinetic nuclear migration (INM) and essential for nucleokinesis and centrosome-nucleus coupling during radial neuronal migration in the cerebral cortex and during glial migration. Required for nuclear migration in retinal photoreceptor progenitors implicating association with cytoplasmic dynein-dynactin and kinesin motor complexes, and probably B-type lamins; SUN1 and SUN2 seem to act redundantly. The SUN1/2:KASH5 LINC complex couples telomeres to microtubules during meiosis; SUN1 and SUN2 seem to act at least partial redundantly. Anchors chromosome movement in the prophase of meiosis and is involved in selective gene expression of coding and non-coding RNAs needed for gametogenesis. Required for telomere attachment to nuclear envelope and gametogenesis. May also function on endocytic vesicles as a receptor for Rab5-GDP and participate in the activation of Rab5. This is SUN domain-containing protein 2 from Mus musculus (Mouse).